A 214-amino-acid polypeptide reads, in one-letter code: Octanoyltransferase (214 aa).

One can recognise a BPL/LPL catalytic domain in the interval 34–214; it reads GVQKELVWLL…KFNEIFSNFN (181 aa). Residues 73-80, 145-147, and 158-160 each bind substrate; these read RGGKYTYH, AFG, and GVS. The Acyl-thioester intermediate role is filled by Cys-176.

It belongs to the LipB family.

It localises to the cytoplasm. It carries out the reaction octanoyl-[ACP] + L-lysyl-[protein] = N(6)-octanoyl-L-lysyl-[protein] + holo-[ACP] + H(+). It functions in the pathway protein modification; protein lipoylation via endogenous pathway; protein N(6)-(lipoyl)lysine from octanoyl-[acyl-carrier-protein]: step 1/2. In terms of biological role, catalyzes the transfer of endogenously produced octanoic acid from octanoyl-acyl-carrier-protein onto the lipoyl domains of lipoate-dependent enzymes. Lipoyl-ACP can also act as a substrate although octanoyl-ACP is likely to be the physiological substrate. The chain is Octanoyltransferase from Ehrlichia chaffeensis (strain ATCC CRL-10679 / Arkansas).